The primary structure comprises 177 residues: RNA pyrophosphohydrolase (177 aa).

A Nudix hydrolase domain is found at 6-149 (GYRPNVGIVI…KRDVYRRVMK (144 aa)). Residues 38 to 59 (GGINPGESPEQAMYRELFEEVG) carry the Nudix box motif.

This sequence belongs to the Nudix hydrolase family. RppH subfamily. It depends on a divalent metal cation as a cofactor.

Its function is as follows. Accelerates the degradation of transcripts by removing pyrophosphate from the 5'-end of triphosphorylated RNA, leading to a more labile monophosphorylated state that can stimulate subsequent ribonuclease cleavage. This chain is RNA pyrophosphohydrolase, found in Pectobacterium atrosepticum (strain SCRI 1043 / ATCC BAA-672) (Erwinia carotovora subsp. atroseptica).